The sequence spans 329 residues: Acetyl-coenzyme A carboxylase carboxyl transferase subunit alpha (329 aa).

The CoA carboxyltransferase C-terminal domain occupies 40 to 294 (QLESLAARRR…RAALERHLGE (255 aa)).

This sequence belongs to the AccA family. In terms of assembly, acetyl-CoA carboxylase is a heterohexamer composed of biotin carboxyl carrier protein (AccB), biotin carboxylase (AccC) and two subunits each of ACCase subunit alpha (AccA) and ACCase subunit beta (AccD).

The protein resides in the cytoplasm. The enzyme catalyses N(6)-carboxybiotinyl-L-lysyl-[protein] + acetyl-CoA = N(6)-biotinyl-L-lysyl-[protein] + malonyl-CoA. It functions in the pathway lipid metabolism; malonyl-CoA biosynthesis; malonyl-CoA from acetyl-CoA: step 1/1. Component of the acetyl coenzyme A carboxylase (ACC) complex. First, biotin carboxylase catalyzes the carboxylation of biotin on its carrier protein (BCCP) and then the CO(2) group is transferred by the carboxyltransferase to acetyl-CoA to form malonyl-CoA. The sequence is that of Acetyl-coenzyme A carboxylase carboxyl transferase subunit alpha from Parasynechococcus marenigrum (strain WH8102).